The sequence spans 338 residues: Microtubule-associated protein RP/EB family member 2 (338 aa).

The disordered stretch occupies residues 1 to 21 (MPGPTQALSPNGENNNDIIQD). Residues 57–159 (TMSRHDIIAW…FIQWFKKFFD (103 aa)) form the Calponin-homology (CH) domain. Disordered regions lie at residues 171 to 241 (EARQ…KDLE) and 300 to 338 (SEEH…FHFV). The span at 200 to 234 (SPTAGAAKSSPASKPGSTPSRPSSAKKAAPSSSAS) shows a compositional bias: low complexity. An EB1 C-terminal domain is found at 236 to 306 (SDKDLETQVI…LYASEEHESH (71 aa)). Residues 300 to 327 (SEEHESHTEEHEGEEQVHEQPSSRRSTD) show a composition bias toward basic and acidic residues. Residues 328 to 338 (SRSVSDNFHFV) are compositionally biased toward low complexity.

This sequence belongs to the MAPRE family.

The protein resides in the cytoplasm. The protein localises to the cytoskeleton. In terms of biological role, may be involved in microtubule polymerization, and spindle function by stabilizing microtubules and anchoring them at centrosomes. This chain is Microtubule-associated protein RP/EB family member 2 (MAPRE2), found in Gallus gallus (Chicken).